The sequence spans 96 residues: Large ribosomal subunit protein bL28 (96 aa).

It belongs to the bacterial ribosomal protein bL28 family.

The polypeptide is Large ribosomal subunit protein bL28 (Methylobacterium sp. (strain 4-46)).